The following is a 698-amino-acid chain: Epithelial sodium channel subunit alpha (698 aa).

Residues 1-70 (MLDHTRAPEL…SAPRQPTEEE (70 aa)) form a disordered region. The Cytoplasmic segment spans residues 1–110 (MLDHTRAPEL…CSKHNRMKTA (110 aa)). A helical membrane pass occupies residues 111–131 (FWAVLWLCTFGMMYWQFALLF). Over 132 to 589 (EEYLSYPVSL…SQWSLWFGSS (458 aa)) the chain is Extracellular. 3 disulfides stabilise this stretch: Cys-158-Cys-332, Cys-256-Cys-263, and Cys-309-Cys-316. A glycan (N-linked (GlcNAc...) asparagine) is linked at Asn-190. The segment at 200 to 270 (RRRSSRDLLG…SDCFYQTYSS (71 aa)) is gating release of inhibition by proteolysis (GRIP); protease-sensitive region that is responsible for the proteolytic activation of the channel. The interval 213–243 (HPLQRLRTPPPPYSGRTARSGSSSVRDNNPQ) is disordered. Over residues 229-243 (TARSGSSSVRDNNPQ) the composition is skewed to polar residues. An N-linked (GlcNAc...) asparagine glycan is attached at Asn-259. Asn-320, Asn-339, and Asn-424 each carry an N-linked (GlcNAc...) asparagine glycan. Disulfide bonds link Cys-421-Cys-506, Cys-443-Cys-483, Cys-443-Cys-502, Cys-447-Cys-498, Cys-456-Cys-483, Cys-456-Cys-506, and Cys-458-Cys-472. Asn-538 is a glycosylation site (N-linked (GlcNAc...) asparagine). A helical transmembrane segment spans residues 590–610 (VLSVVEMAELIFDLLVITLLM). Topologically, residues 611–698 (LLRRFRSRYW…DCSACALAAL (88 aa)) are cytoplasmic. Residues 637–663 (ASSFPSRFCPHPTSPPPSLPQQGMTPP) form a disordered region. Positions 669–673 (PPPAY) match the PY motif; recruits WW domain-containing proteins and is thereby required for ubiquitination and inhibition of the channel by NEDD4 and NEDD4L motif.

Belongs to the amiloride-sensitive sodium channel (TC 1.A.6) family. SCNN1A subfamily. Heterotrimer; containing an alpha/SCNN1A, a beta/SCNN1B and a gamma/SCNN1G subunit. Interacts with WWP1 (via WW domains). Interacts with WWP2 (via WW domains); inhibits the channel. Interacts with BPIFA1; the interaction is indirect via SCNN1B and inhibits the proteolytic processing of SCNN1A and SCNN1G and the activation of ENaC. Interacts with the full-length immature form of PCSK9 (pro-PCSK9). In terms of processing, ubiquitinated. Can be ubiquitinated at multiple sites and undergo monoubiquitination and polyubiquitination. Ubiquitination by NEDD4 or NEDD4L inhibits the ENaC channel through endocytosis, intracellular retention and degradation of its individual subunits. Post-translationally, N-glycosylated. ENaC is activated through the proteolytic maturation of its subunits. Furin cleaves the SCNN1A subunit, which results in a stepwise increase in the open probability of the channel due to the release of an inhibitory tract. BPIFA1, which is recruited by the SCNN1B subunit, prevents the proteolytic activation of ENaC. In terms of tissue distribution, detected in kidney, lung and testis (at protein level). In the testis, detected within the seminiferous tubules but not in the interstitial cells (at protein level).

It localises to the apical cell membrane. Its subcellular location is the cell projection. It is found in the cilium. The protein localises to the cytoplasmic granule. The protein resides in the cytoplasm. It localises to the cytoplasmic vesicle. Its subcellular location is the secretory vesicle. It is found in the acrosome. The protein localises to the flagellum. The catalysed reaction is Na(+)(in) = Na(+)(out). Originally identified and characterized by its inhibition by the diuretic drug amiloride. Its function is as follows. This is one of the three pore-forming subunits of the heterotrimeric epithelial sodium channel (ENaC), a critical regulator of sodium balance and fluid homeostasis. ENaC operates in epithelial tissues, where it mediates the electrodiffusion of sodium ions from extracellular fluid through the apical membrane of cells, with water following osmotically. It plays a key role in maintaining sodium homeostasis through electrogenic sodium reabsorption in the kidneys. Additionally, ENaC is essential for airway surface liquid homeostasis, which is crucial for proper mucus clearance. This chain is Epithelial sodium channel subunit alpha, found in Rattus norvegicus (Rat).